The chain runs to 222 residues: Ras-related protein RabT1 (222 aa).

Position 37–44 (37–44) interacts with GTP; it reads GDNKTGKS. The Effector region motif lies at 59–66; the sequence is VSSIGVDF. GTP-binding positions include 85 to 89 and 145 to 148; these read DVNSC and NKCD. Cys-219 bears the Cysteine methyl ester mark. A lipid anchor (S-geranylgeranyl cysteine) is attached at Cys-219. The propeptide at 220-222 is removed in mature form; that stretch reads NIL.

Belongs to the small GTPase superfamily. Rab family.

The protein localises to the cell membrane. This chain is Ras-related protein RabT1 (rabT1), found in Dictyostelium discoideum (Social amoeba).